A 123-amino-acid polypeptide reads, in one-letter code: Large ribosomal subunit protein uL14 (123 aa).

It belongs to the universal ribosomal protein uL14 family. As to quaternary structure, part of the 50S ribosomal subunit. Forms a cluster with proteins L3 and L19. In the 70S ribosome, L14 and L19 interact and together make contacts with the 16S rRNA in bridges B5 and B8.

Its function is as follows. Binds to 23S rRNA. Forms part of two intersubunit bridges in the 70S ribosome. The sequence is that of Large ribosomal subunit protein uL14 from Aliivibrio salmonicida (strain LFI1238) (Vibrio salmonicida (strain LFI1238)).